The following is a 323-amino-acid chain: Prenyl transferase (323 aa).

Residues Lys46, Arg49, and His81 each contribute to the isopentenyl diphosphate site. Mg(2+)-binding residues include Asp88 and Asp92. Position 97 (Arg97) interacts with an all-trans-polyprenyl diphosphate. Arg98 provides a ligand contact to isopentenyl diphosphate. Residues Lys174, Thr175, and Gln212 each contribute to the an all-trans-polyprenyl diphosphate site.

Belongs to the FPP/GGPP synthase family. The cofactor is Mg(2+).

The protein localises to the plastid. It localises to the chloroplast. In terms of biological role, possible role in synthesis of the nonaprenyl side chain of plastoquinone or in synthesis of other prenyl chains such as undekaprenyl pyrophosphate. This is Prenyl transferase (preA) from Porphyra purpurea (Red seaweed).